The primary structure comprises 208 residues: Protein GrpE (208 aa).

Basic and acidic residues predominate over residues 1-12 (MTNKDESVKKNT). The disordered stretch occupies residues 1 to 51 (MTNKDESVKKNTESTVEETNVKQNIDDSVEQAEESKGHLQDEAIEETSDEN). Over residues 13-23 (ESTVEETNVKQ) the composition is skewed to polar residues. Residues 42-51 (EAIEETSDEN) are compositionally biased toward acidic residues.

The protein belongs to the GrpE family. In terms of assembly, homodimer.

It is found in the cytoplasm. Participates actively in the response to hyperosmotic and heat shock by preventing the aggregation of stress-denatured proteins, in association with DnaK and GrpE. It is the nucleotide exchange factor for DnaK and may function as a thermosensor. Unfolded proteins bind initially to DnaJ; upon interaction with the DnaJ-bound protein, DnaK hydrolyzes its bound ATP, resulting in the formation of a stable complex. GrpE releases ADP from DnaK; ATP binding to DnaK triggers the release of the substrate protein, thus completing the reaction cycle. Several rounds of ATP-dependent interactions between DnaJ, DnaK and GrpE are required for fully efficient folding. The protein is Protein GrpE of Staphylococcus aureus (strain COL).